The primary structure comprises 242 residues: Ribosomal RNA small subunit methyltransferase G (242 aa).

Residues G78, L83, 130 to 131 (AE), and R151 each bind S-adenosyl-L-methionine.

This sequence belongs to the methyltransferase superfamily. RNA methyltransferase RsmG family.

The protein resides in the cytoplasm. Specifically methylates the N7 position of guanine in position 518 of 16S rRNA. The chain is Ribosomal RNA small subunit methyltransferase G from Salinispora tropica (strain ATCC BAA-916 / DSM 44818 / JCM 13857 / NBRC 105044 / CNB-440).